The primary structure comprises 1969 residues: Protein mono-ADP-ribosyltransferase PARP4 (1969 aa).

One can recognise a BRCT domain in the interval 1–94 (MTLGIFANCI…RLLDVRNYDP (94 aa)). The Nuclear localization signal motif lies at 19–25 (PRQQKKK). A disordered region spans residues 92 to 132 (YDPLSPAPAAPPAERSRSEVQSEYLPSDNTPEKENTEVTEV). The PARP alpha-helical domain maps to 235–363 (SEKLQALLLE…ETNLSKPNPP (129 aa)). A PARP catalytic domain is found at 362-566 (PPSLAKYRAL…FCTPGDQIKE (205 aa)). The 129-residue stretch at 600-728 (TNIKAGLQDA…KVLIKITYIT (129 aa)) folds into the VIT domain. The 171-residue stretch at 869–1039 (EVIICLDCSS…KQIEAQMTRI (171 aa)) folds into the VWFA domain. Phosphoserine is present on serine 1229. The Nuclear localization signal signature appears at 1230–1242 (DGHGVLQPVSVSS). Composition is skewed to pro residues over residues 1372-1387 (PPHPLGGTHPPPPLPL), 1402-1417 (HPPPPLFGGTLIPPPS), 1425-1444 (LPPPPPLPGGTHIPPPPPIP), 1485-1513 (LPPPPLLPAGTHIPPPPPITGSTHPPPPS), and 1521-1540 (LPPPPPLPGGTHIPPPPPIP). The disordered stretch occupies residues 1372–1608 (PPHPLGGTHP…AGTQFSLSPI (237 aa)). One can recognise an FH1 domain in the interval 1443–1541 (IPGGTLIPPS…HIPPPPPIPG (99 aa)). Over residues 1541 to 1556 (GGTLIPSPSSLFGGTH) the composition is skewed to low complexity. The segment covering 1557-1585 (LPPPPLLPAGTHIPPPPPITGSTHPPPPS) has biased composition (pro residues). The tract at residues 1808–1969 (FCDEDQESPV…LHRILYYSQG (162 aa)) is interaction with the major vault protein.

It belongs to the ARTD/PARP family. As to quaternary structure, component of the vault ribonucleoprotein particle, at least composed of MVP, PARP4 and one or more vault RNAs (vRNAs). Interacts with TEP1.

The protein localises to the cytoplasm. Its subcellular location is the nucleus. The enzyme catalyses L-aspartyl-[protein] + NAD(+) = 4-O-(ADP-D-ribosyl)-L-aspartyl-[protein] + nicotinamide. It carries out the reaction L-glutamyl-[protein] + NAD(+) = 5-O-(ADP-D-ribosyl)-L-glutamyl-[protein] + nicotinamide. Mono-ADP-ribosyltransferase that mediates mono-ADP-ribosylation of target proteins. The protein is Protein mono-ADP-ribosyltransferase PARP4 of Mus musculus (Mouse).